We begin with the raw amino-acid sequence, 69 residues long: MANNNSSNNNELLVYGAEQAIDQMKYEIASEFGVNLGADTTARANGSVGGEITKRLVQLAEQQLGGGRF.

It belongs to the alpha/beta-type SASP family.

SASP are bound to spore DNA. They are double-stranded DNA-binding proteins that cause DNA to change to an a-like conformation. They protect the DNA backbone from chemical and enzymatic cleavage and are thus involved in dormant spore's high resistance to UV light. This Priestia megaterium (Bacillus megaterium) protein is Small, acid-soluble spore protein C1 (SASP-C1).